Consider the following 341-residue polypeptide: HTH-type transcriptional repressor PurR (341 aa).

Residues A2 to V56 form the HTH lacI-type domain. The segment at residues I4–N23 is a DNA-binding region (H-T-H motif). The DNA-binding element occupies S48–V56. 5 residues coordinate hypoxanthine: Y73, R190, T192, F221, and D275.

As to quaternary structure, homodimer.

The protein operates within purine metabolism; purine nucleotide biosynthesis [regulation]. Functionally, is the main repressor of the genes involved in the de novo synthesis of purine nucleotides, regulating purB, purC, purEK, purF, purHD, purL, purMN and guaBA expression. PurR is allosterically activated to bind its cognate DNA by binding the purine corepressors, hypoxanthine or guanine, thereby effecting transcription repression. The sequence is that of HTH-type transcriptional repressor PurR from Yersinia enterocolitica serotype O:8 / biotype 1B (strain NCTC 13174 / 8081).